A 268-amino-acid polypeptide reads, in one-letter code: Hydroxyethylthiazole kinase (268 aa).

Methionine 47 provides a ligand contact to substrate. Residues arginine 122 and threonine 168 each coordinate ATP. Position 195 (alanine 195) interacts with substrate.

The protein belongs to the Thz kinase family. Mg(2+) serves as cofactor.

It catalyses the reaction 5-(2-hydroxyethyl)-4-methylthiazole + ATP = 4-methyl-5-(2-phosphooxyethyl)-thiazole + ADP + H(+). Its pathway is cofactor biosynthesis; thiamine diphosphate biosynthesis; 4-methyl-5-(2-phosphoethyl)-thiazole from 5-(2-hydroxyethyl)-4-methylthiazole: step 1/1. In terms of biological role, catalyzes the phosphorylation of the hydroxyl group of 4-methyl-5-beta-hydroxyethylthiazole (THZ). This Rhizobium rhizogenes (strain K84 / ATCC BAA-868) (Agrobacterium radiobacter) protein is Hydroxyethylthiazole kinase.